The primary structure comprises 302 residues: 4-hydroxy-tetrahydrodipicolinate synthase (302 aa).

Thr-55 serves as a coordination point for pyruvate. Tyr-144 acts as the Proton donor/acceptor in catalysis. Residue Lys-172 is the Schiff-base intermediate with substrate of the active site. Position 214 (Val-214) interacts with pyruvate.

It belongs to the DapA family. In terms of assembly, homotetramer; dimer of dimers.

It is found in the cytoplasm. The enzyme catalyses L-aspartate 4-semialdehyde + pyruvate = (2S,4S)-4-hydroxy-2,3,4,5-tetrahydrodipicolinate + H2O + H(+). It participates in amino-acid biosynthesis; L-lysine biosynthesis via DAP pathway; (S)-tetrahydrodipicolinate from L-aspartate: step 3/4. Catalyzes the condensation of (S)-aspartate-beta-semialdehyde [(S)-ASA] and pyruvate to 4-hydroxy-tetrahydrodipicolinate (HTPA). This is 4-hydroxy-tetrahydrodipicolinate synthase from Synechococcus sp. (strain CC9605).